A 619-amino-acid chain; its full sequence is Chaperone protein HscA homolog (619 aa).

It belongs to the heat shock protein 70 family.

Its function is as follows. Chaperone involved in the maturation of iron-sulfur cluster-containing proteins. Has a low intrinsic ATPase activity which is markedly stimulated by HscB. In Acinetobacter baumannii (strain ATCC 17978 / DSM 105126 / CIP 53.77 / LMG 1025 / NCDC KC755 / 5377), this protein is Chaperone protein HscA homolog.